A 122-amino-acid chain; its full sequence is Large ribosomal subunit protein uL14 (122 aa).

It belongs to the universal ribosomal protein uL14 family. In terms of assembly, part of the 50S ribosomal subunit. Forms a cluster with proteins L3 and L19. In the 70S ribosome, L14 and L19 interact and together make contacts with the 16S rRNA in bridges B5 and B8.

Functionally, binds to 23S rRNA. Forms part of two intersubunit bridges in the 70S ribosome. The sequence is that of Large ribosomal subunit protein uL14 from Maridesulfovibrio salexigens (strain ATCC 14822 / DSM 2638 / NCIMB 8403 / VKM B-1763) (Desulfovibrio salexigens).